The primary structure comprises 519 residues: MIOREX complex component 12 (519 aa).

The N-terminal 35 residues, 1-35, are a transit peptide targeting the mitochondrion; that stretch reads MLRSLHSAATLSNKRFYSLISHSNRKNIIKKLLRH.

In terms of assembly, associates with the mitochondrial ribosome.

It is found in the mitochondrion. Its function is as follows. Component of MIOREX complexes, large expressome-like assemblies of ribosomes with factors involved in all the steps of post-transcriptional gene expression. The sequence is that of MIOREX complex component 12 from Saccharomyces cerevisiae (strain ATCC 204508 / S288c) (Baker's yeast).